We begin with the raw amino-acid sequence, 317 residues long: Ribosomal protein L11 methyltransferase (317 aa).

S-adenosyl-L-methionine contacts are provided by threonine 158, glycine 179, aspartate 201, and asparagine 244.

It belongs to the methyltransferase superfamily. PrmA family.

It localises to the cytoplasm. It catalyses the reaction L-lysyl-[protein] + 3 S-adenosyl-L-methionine = N(6),N(6),N(6)-trimethyl-L-lysyl-[protein] + 3 S-adenosyl-L-homocysteine + 3 H(+). Methylates ribosomal protein L11. This Streptococcus agalactiae serotype III (strain NEM316) protein is Ribosomal protein L11 methyltransferase.